The chain runs to 432 residues: Phosphomethylpyrimidine synthase (432 aa).

Substrate-binding positions include Asn-69, Met-98, Tyr-127, His-163, 185–187 (SRG), 226–229 (DACR), and Glu-265. His-269 is a Zn(2+) binding site. Tyr-292 contacts substrate. His-333 provides a ligand contact to Zn(2+). [4Fe-4S] cluster is bound by residues Cys-409, Cys-412, and Cys-416.

It belongs to the ThiC family. It depends on [4Fe-4S] cluster as a cofactor.

The enzyme catalyses 5-amino-1-(5-phospho-beta-D-ribosyl)imidazole + S-adenosyl-L-methionine = 4-amino-2-methyl-5-(phosphooxymethyl)pyrimidine + CO + 5'-deoxyadenosine + formate + L-methionine + 3 H(+). It functions in the pathway cofactor biosynthesis; thiamine diphosphate biosynthesis. Catalyzes the synthesis of the hydroxymethylpyrimidine phosphate (HMP-P) moiety of thiamine from aminoimidazole ribotide (AIR) in a radical S-adenosyl-L-methionine (SAM)-dependent reaction. This Pelotomaculum thermopropionicum (strain DSM 13744 / JCM 10971 / SI) protein is Phosphomethylpyrimidine synthase.